The sequence spans 104 residues: Guanidinium exporter (104 aa).

Residues 1 to 3 (MSW) lie on the Cytoplasmic side of the membrane. The chain crosses the membrane as a helical span at residues 4–26 (IILFVAGLLEIVWAVGLKYTHGF). The Periplasmic portion of the chain corresponds to 27 to 32 (TRLTPS). The helical transmembrane segment at 33–50 (IITISAMIVSMGMLSYAM) threads the bilayer. The Cytoplasmic portion of the chain corresponds to 51 to 54 (KGLP). Residues 55–77 (AGTAYAIWTGIGAVGTAIFGIIV) traverse the membrane as a helical segment. At 78–83 (FGESAN) the chain is on the periplasmic side. A helical transmembrane segment spans residues 84-103 (IYRLLSLAMIVFGIIGLKLA). Ser104 is a topological domain (cytoplasmic).

Belongs to the drug/metabolite transporter (DMT) superfamily. Small multidrug resistance (SMR) (TC 2.A.7.1) family. Gdx/SugE subfamily.

Its subcellular location is the cell inner membrane. Its function is as follows. Guanidinium ion exporter. Couples guanidinium export to the proton motive force, exchanging one guanidinium ion for two protons. This chain is Guanidinium exporter, found in Proteus vulgaris.